The primary structure comprises 269 residues: Protein UL24 (269 aa).

The segment at 191–244 (IEPRTQRARRRRGGAARGSASRPKRSHSGARDPPESAARQLPPADQTPTSTEGG) is disordered.

Belongs to the herpesviridae UL24 family.

Its subcellular location is the virion. It localises to the host cytoplasm. It is found in the host nucleus. The protein resides in the host nucleolus. The protein localises to the host Golgi apparatus. Its function is as follows. May participate in nuclear egress of viral particles. Plays a role in the dispersal of several host nucleolar proteins including NCL/nucleolin and NPM1. Since deletion of host NCL/nucleolin negatively impact on nuclear egress, UL24 supposedly acts on this process through its effect on host nucleoli. The sequence is that of Protein UL24 from Homo sapiens (Human).